Here is a 62-residue protein sequence, read N- to C-terminus: Beta-defensin 110 (62 aa).

Residues 1–21 (MKIHLFFFILLFWVTILPARS) form the signal peptide. 3 disulfide bridges follow: C32–C60, C39–C53, and C43–C61.

Belongs to the beta-defensin family.

It localises to the secreted. Its function is as follows. Has antibacterial activity. The chain is Beta-defensin 110 (DEFB110) from Canis lupus familiaris (Dog).